A 396-amino-acid chain; its full sequence is KiSS-1 receptor (396 aa).

Topologically, residues 1–43 are extracellular; it reads MATEATLAPNVTWWAPSNASGCPGCGVNASDDPGSAPRPLDAW. 3 N-linked (GlcNAc...) asparagine glycosylation sites follow: Asn-10, Asn-18, and Asn-28. Residues 44-66 traverse the membrane as a helical segment; the sequence is LVPLFFATLMLLGLVGNSLVIYV. At 67–78 the chain is on the cytoplasmic side; the sequence is ICRHKHMQTVTN. The helical transmembrane segment at 79 to 101 threads the bilayer; that stretch reads FYIANLAATDVTFLLCCVPFTAL. Topologically, residues 102–116 are extracellular; the sequence is LYPLPAWVLGDFMCK. A disulfide bridge connects residues Cys-115 and Cys-191. A helical transmembrane segment spans residues 117–138; sequence FVNYIQQVSVQATCATLTAMSV. Topologically, residues 139 to 157 are cytoplasmic; that stretch reads DRWYVTVFPLRALHRRTPR. Residues 158–180 form a helical membrane-spanning segment; that stretch reads LALAVSLSIWVGSAAVSAPVLAL. Topologically, residues 181 to 203 are extracellular; that stretch reads HRLSPGPRTYCSEAFPSRALERA. Residues 204 to 224 traverse the membrane as a helical segment; it reads FALYNLLALYLLPLLATCACY. At 225–260 the chain is on the cytoplasmic side; the sequence is GAMLRHLGRAAVRPAPTDGALQGQLLAQRAGAVRTK. The chain crosses the membrane as a helical span at residues 261 to 283; the sequence is VSRLVAAVVLLFAACWGPIQLFL. The Extracellular segment spans residues 284-305; that stretch reads VLQALGPSGAWHPRSYAAYAVK. Residues 306–330 traverse the membrane as a helical segment; it reads IWAHCMSYSNSALNPLLYAFLGSHF. Topologically, residues 331-396 are cytoplasmic; sequence RQAFCRVCPC…CAQSERTASL (66 aa). A disordered region spans residues 349–396; it reads HTSAHSDRAATHTVPHSRAAHPVRIRSPEPGNPVVRSPCAQSERTASL. Residues 387 to 396 show a composition bias toward polar residues; the sequence is CAQSERTASL.

The protein belongs to the G-protein coupled receptor 1 family. As to expression, highest level in the heart and 15- and 17-day embryos. Low level in other tissues. Colocalized with gonadotropin-releasing hormone (GnRH) neurons in the hypothalamus.

It is found in the cell membrane. Receptor for metastin (kisspeptin-52 or kp-52), a C-terminally amidated peptide of KiSS1. KiSS1 is a metastasis suppressor protein. Activation of the receptor inhibits cell proliferation and cell migration, key characteristics of tumor metastasis. The receptor is essential for normal gonadotropin-released hormone physiology and for puberty. The hypothalamic KiSS1/KISS1R system is a pivotal factor in central regulation of the gonadotropic axis at puberty and in adulthood. Analysis of the transduction pathways activated by the receptor identifies coupling to phospholipase C and intracellular calcium release through pertussis toxin-insensitive G(q) proteins. In Mus musculus (Mouse), this protein is KiSS-1 receptor (Kiss1r).